A 345-amino-acid chain; its full sequence is Phosphoribosylformylglycinamidine cyclo-ligase (345 aa).

Belongs to the AIR synthase family.

It is found in the cytoplasm. It catalyses the reaction 2-formamido-N(1)-(5-O-phospho-beta-D-ribosyl)acetamidine + ATP = 5-amino-1-(5-phospho-beta-D-ribosyl)imidazole + ADP + phosphate + H(+). Its pathway is purine metabolism; IMP biosynthesis via de novo pathway; 5-amino-1-(5-phospho-D-ribosyl)imidazole from N(2)-formyl-N(1)-(5-phospho-D-ribosyl)glycinamide: step 2/2. This is Phosphoribosylformylglycinamidine cyclo-ligase from Shewanella amazonensis (strain ATCC BAA-1098 / SB2B).